The following is a 189-amino-acid chain: Chitin synthase 1 (189 aa).

This sequence belongs to the chitin synthase family. Class I subfamily.

Its subcellular location is the cell membrane. The catalysed reaction is [(1-&gt;4)-N-acetyl-beta-D-glucosaminyl](n) + UDP-N-acetyl-alpha-D-glucosamine = [(1-&gt;4)-N-acetyl-beta-D-glucosaminyl](n+1) + UDP + H(+). Polymerizes chitin, a structural polymer of the cell wall and septum, by transferring the sugar moiety of UDP-GlcNAc to the non-reducing end of the growing chitin polymer. The protein is Chitin synthase 1 (CHS1) of Rhinocladiella atrovirens.